Consider the following 330-residue polypeptide: T-cell surface glycoprotein CD1b4 (330 aa).

A signal peptide spans 1-15 (MLLLALAFFFPAGDT). Topologically, residues 16–299 (QNVLPGKISF…LYWGHSISIG (284 aa)) are extracellular. N-linked (GlcNAc...) asparagine glycans are attached at residues asparagine 35, asparagine 72, and asparagine 143. Disulfide bonds link cysteine 117–cysteine 181 and cysteine 221–cysteine 276. The Ig-like domain occupies 182–292 (PRYLMSVIEA…LEGQDIILYW (111 aa)). A helical membrane pass occupies residues 300–320 (WIILAVLVPCLIVLVLFILWF). Topologically, residues 321–330 (YRRWSYEDIF) are cytoplasmic. Positions 326–329 (YEDI) match the Internalization signal motif.

As to quaternary structure, heterodimer with B2M (beta-2-microglobulin). Interacts with saposin C.

The protein resides in the cell membrane. It localises to the endosome membrane. It is found in the lysosome membrane. Antigen-presenting protein that binds self and non-self lipid and glycolipid antigens and presents them to T-cell receptors on natural killer T-cells. In Cavia porcellus (Guinea pig), this protein is T-cell surface glycoprotein CD1b4 (CD1B4).